The chain runs to 515 residues: Bifunctional purine biosynthesis protein PurH (515 aa).

One can recognise an MGS-like domain in the interval 1 to 145 (MTKRALISVS…KNHASVTVVV (145 aa)).

The protein belongs to the PurH family.

It catalyses the reaction (6R)-10-formyltetrahydrofolate + 5-amino-1-(5-phospho-beta-D-ribosyl)imidazole-4-carboxamide = 5-formamido-1-(5-phospho-D-ribosyl)imidazole-4-carboxamide + (6S)-5,6,7,8-tetrahydrofolate. It carries out the reaction IMP + H2O = 5-formamido-1-(5-phospho-D-ribosyl)imidazole-4-carboxamide. It functions in the pathway purine metabolism; IMP biosynthesis via de novo pathway; 5-formamido-1-(5-phospho-D-ribosyl)imidazole-4-carboxamide from 5-amino-1-(5-phospho-D-ribosyl)imidazole-4-carboxamide (10-formyl THF route): step 1/1. It participates in purine metabolism; IMP biosynthesis via de novo pathway; IMP from 5-formamido-1-(5-phospho-D-ribosyl)imidazole-4-carboxamide: step 1/1. The protein is Bifunctional purine biosynthesis protein PurH of Streptococcus agalactiae serotype III (strain NEM316).